The sequence spans 1677 residues: ELMO domain-containing protein E (1677 aa).

Disordered stretches follow at residues 112-139 (TTTS…SSPS), 168-194 (NSKD…SNIK), 264-372 (QLHG…NTTE), 592-625 (DDDN…RSNS), 775-801 (PNSN…STNN), 888-947 (INKN…NQDI), 982-1002 (KIRS…SQPE), 1047-1075 (STNN…ETRS), 1122-1141 (KQKS…GNVS), 1197-1248 (NNNI…DNHA), 1261-1404 (DDDD…RKKR), 1434-1454 (SPGS…PQPE), 1467-1593 (KNPE…GDVS), and 1654-1677 (ESQR…SSSK). Composition is skewed to low complexity over residues 115–139 (SSSS…SSPS) and 172–194 (TNNS…SNIK). Residues 269-278 (SIGGGGGGSG) show a composition bias toward gly residues. 3 stretches are compositionally biased toward low complexity: residues 307–334 (SQSN…KPNN), 341–352 (TTTTTTTTTTTS), and 597–616 (NNNN…NNYN). Residues 492–710 (SHQILLSDLW…HTREIIEKVC (219 aa)) enclose the ELMO domain. A compositionally biased stretch (gly residues) spans 891–903 (NGGGGGGGGGGGV). Over residues 922–933 (IDDSDDENDNDE) the composition is skewed to acidic residues. 2 stretches are compositionally biased toward low complexity: residues 934–946 (VNNN…INQD) and 985–996 (SSSSTPDTSSPP). A coiled-coil region spans residues 1186–1212 (LLDDVLDLNQTNNNIDNENDDINEAII). The span at 1228 to 1238 (EEEEEEEEEEE) shows a compositional bias: acidic residues. The span at 1285–1305 (NNTTTTTTTTTTTTTTTTNTT) shows a compositional bias: low complexity. A compositionally biased stretch (polar residues) spans 1306 to 1334 (GQKRISILSTDTNRPGSSNYGESSLSNGS). Acidic residues predominate over residues 1387-1397 (DDEDDEDDDDK). Residues 1445–1454 (PHLSVSPQPE) are compositionally biased toward polar residues. 3 stretches are compositionally biased toward low complexity: residues 1475-1488 (LSSS…PLLS), 1503-1574 (SNLI…PSSS), and 1663-1677 (ASSS…SSSK).

This Dictyostelium discoideum (Social amoeba) protein is ELMO domain-containing protein E (elmoE).